A 268-amino-acid chain; its full sequence is Putative hydro-lyase ABSDF2257 (268 aa).

It belongs to the D-glutamate cyclase family.

This chain is Putative hydro-lyase ABSDF2257, found in Acinetobacter baumannii (strain SDF).